An 887-amino-acid polypeptide reads, in one-letter code: Alanine--tRNA ligase (887 aa).

H564, H568, C676, and H680 together coordinate Zn(2+).

Belongs to the class-II aminoacyl-tRNA synthetase family. Requires Zn(2+) as cofactor.

The protein localises to the cytoplasm. The catalysed reaction is tRNA(Ala) + L-alanine + ATP = L-alanyl-tRNA(Ala) + AMP + diphosphate. Functionally, catalyzes the attachment of alanine to tRNA(Ala) in a two-step reaction: alanine is first activated by ATP to form Ala-AMP and then transferred to the acceptor end of tRNA(Ala). Also edits incorrectly charged Ser-tRNA(Ala) and Gly-tRNA(Ala) via its editing domain. This is Alanine--tRNA ligase from Sinorhizobium medicae (strain WSM419) (Ensifer medicae).